A 202-amino-acid polypeptide reads, in one-letter code: NADH-quinone oxidoreductase subunit C (202 aa).

Belongs to the complex I 30 kDa subunit family. As to quaternary structure, NDH-1 is composed of 14 different subunits. Subunits NuoB, C, D, E, F, and G constitute the peripheral sector of the complex.

It localises to the cell inner membrane. The enzyme catalyses a quinone + NADH + 5 H(+)(in) = a quinol + NAD(+) + 4 H(+)(out). NDH-1 shuttles electrons from NADH, via FMN and iron-sulfur (Fe-S) centers, to quinones in the respiratory chain. The immediate electron acceptor for the enzyme in this species is believed to be ubiquinone. Couples the redox reaction to proton translocation (for every two electrons transferred, four hydrogen ions are translocated across the cytoplasmic membrane), and thus conserves the redox energy in a proton gradient. The sequence is that of NADH-quinone oxidoreductase subunit C from Brucella canis (strain ATCC 23365 / NCTC 10854 / RM-666).